The chain runs to 185 residues: Large ribosomal subunit protein uL5 (185 aa).

The protein belongs to the universal ribosomal protein uL5 family. As to quaternary structure, part of the 50S ribosomal subunit; part of the 5S rRNA/L5/L18/L25 subcomplex. Contacts the 5S rRNA and the P site tRNA. Forms a bridge to the 30S subunit in the 70S ribosome.

Functionally, this is one of the proteins that bind and probably mediate the attachment of the 5S RNA into the large ribosomal subunit, where it forms part of the central protuberance. In the 70S ribosome it contacts protein S13 of the 30S subunit (bridge B1b), connecting the 2 subunits; this bridge is implicated in subunit movement. Contacts the P site tRNA; the 5S rRNA and some of its associated proteins might help stabilize positioning of ribosome-bound tRNAs. This chain is Large ribosomal subunit protein uL5, found in Streptomyces avermitilis (strain ATCC 31267 / DSM 46492 / JCM 5070 / NBRC 14893 / NCIMB 12804 / NRRL 8165 / MA-4680).